The following is a 423-amino-acid chain: Histidine--tRNA ligase (423 aa).

Belongs to the class-II aminoacyl-tRNA synthetase family. Homodimer.

Its subcellular location is the cytoplasm. It catalyses the reaction tRNA(His) + L-histidine + ATP = L-histidyl-tRNA(His) + AMP + diphosphate + H(+). The polypeptide is Histidine--tRNA ligase (Geobacillus sp. (strain WCH70)).